The primary structure comprises 346 residues: Putative [LysW]-L-2-aminoadipate/[LysW]-L-glutamate phosphate reductase (346 aa).

12 to 15 serves as a coordination point for NADP(+); it reads SGFT. Cys-147 is an active-site residue. The tract at residues 178–198 is disordered; the sequence is GSSEGGAGGGDASSHPERSGV. Asn-310 is an NADP(+) binding site.

This sequence belongs to the NAGSA dehydrogenase family. Type 1 subfamily. LysY sub-subfamily.

The protein resides in the cytoplasm. It carries out the reaction [amino-group carrier protein]-C-terminal-N-(1-carboxy-5-oxopentan-1-yl)-L-glutamine + phosphate + NADP(+) = [amino-group carrier protein]-C-terminal-N-(1-carboxy-5-phosphooxy-5-oxopentan-1-yl)-L-glutamine + NADPH + H(+). The catalysed reaction is [amino-group carrier protein]-C-terminal-gamma-(L-glutamyl-5-semialdehyde)-L-glutamate + phosphate + NADP(+) = [amino-group carrier protein]-C-terminal-gamma-(5-phospho-L-glutamyl)-L-glutamate + NADPH + H(+). It functions in the pathway amino-acid biosynthesis; L-lysine biosynthesis via AAA pathway; L-lysine from L-alpha-aminoadipate (Thermus route): step 3/5. The protein operates within amino-acid biosynthesis; L-arginine biosynthesis. Functionally, involved in both the arginine and lysine biosynthetic pathways. The polypeptide is Putative [LysW]-L-2-aminoadipate/[LysW]-L-glutamate phosphate reductase (Haloquadratum walsbyi (strain DSM 16790 / HBSQ001)).